The chain runs to 300 residues: MESVLDAFDQYLALERGRSDHTRRAYLGDLRSLFAFCNERTPGADLGSLTLPVLRAWLSAQAAAGTARTTLARRTSAVKTFTAWAVRRGLMASDPATRLQMPKARRTLPAVLRQDQARDALDAANSGAQQGDPLALRDRLIVEMLYATGIRVSELCGLDIDDVDTSRRLLRVLGKGDKQRTVPFGEPAEQALRAWLTSGRPALATAESGPALLLGARGRRLDPRQARTVVHETVGAVAGAPDIGPHGLRHSAATHLLEGGADLRIVQELLGHSTLATTQLYTHVTVARLRAVHDQAHPRA.

The Core-binding (CB) domain maps to 1-86; it reads MESVLDAFDQ…AVKTFTAWAV (86 aa). The Tyr recombinase domain maps to 107–294; it reads TLPAVLRQDQ…TVARLRAVHD (188 aa). Active-site residues include R151, K175, H246, R249, and H272. The O-(3'-phospho-DNA)-tyrosine intermediate role is filled by Y281.

This sequence belongs to the 'phage' integrase family. XerC subfamily. In terms of assembly, forms a cyclic heterotetrameric complex composed of two molecules of XerC and two molecules of XerD.

The protein resides in the cytoplasm. Functionally, site-specific tyrosine recombinase, which acts by catalyzing the cutting and rejoining of the recombining DNA molecules. The XerC-XerD complex is essential to convert dimers of the bacterial chromosome into monomers to permit their segregation at cell division. It also contributes to the segregational stability of plasmids. The protein is Tyrosine recombinase XerC of Mycobacterium sp. (strain KMS).